Reading from the N-terminus, the 835-residue chain is Transcription intermediary factor 1-beta (835 aa).

Positions 1–19 are enriched in low complexity; that stretch reads MAASAAAASAAAASAASGS. A disordered region spans residues 1–49; sequence MAASAAAASAAAASAASGSPGPGEGSAGGEKRSTAPSAAASASASAAAS. A2 bears the N-acetylalanine mark. S19 and S26 each carry phosphoserine. A Glycyl lysine isopeptide (Lys-Gly) (interchain with G-Cter in SUMO2) cross-link involves residue K31. The span at 35 to 49 shows a compositional bias: low complexity; sequence APSAAASASASAAAS. S50 is subject to Phosphoserine. Residues 65–121 form an RING-type zinc finger; sequence CGVCRERLRPEREPRLLPCLHSACSACLGPAAPAAANSSGDGGAAGDGTVVDCPVCK. Positions 65 to 376 are RBCC domain; the sequence is CGVCRERLRP…LIYFQLHRAL (312 aa). K127 is covalently cross-linked (Glycyl lysine isopeptide (Lys-Gly) (interchain with G-Cter in SUMO2)). Residue S138 is modified to Phosphoserine. The B box-type 1; atypical zinc-finger motif lies at 148-195; the sequence is DANQCCTSCEDNAPATSYCVECSEPLCETCVEAHQRVKYTKDHTVRST. Positions 153, 156, 177, and 181 each coordinate Zn(2+). Residue K199 forms a Glycyl lysine isopeptide (Lys-Gly) (interchain with G-Cter in SUMO2) linkage. The B box-type 2 zinc finger occupies 204-245; it reads ERTVYCNVHKHEPLVLFCESCDTLTCRDCQLNAHKDHQYQFL. Zn(2+) contacts are provided by C209, H212, C232, and H237. Positions 246-376 are leucine zipper alpha helical coiled-coil region; the sequence is EDAVRNQRKL…LIYFQLHRAL (131 aa). Positions 247 to 376 are interaction with MAGEC2; the sequence is DAVRNQRKLL…LIYFQLHRAL (130 aa). Residues K254 and K261 each participate in a glycyl lysine isopeptide (Lys-Gly) (interchain with G-Cter in SUMO2) cross-link. K266 bears the N6-acetyllysine mark. K272 is covalently cross-linked (Glycyl lysine isopeptide (Lys-Gly) (interchain with G-Cter in SUMO2)). K304 is subject to N6-acetyllysine; alternate. K304 participates in a covalent cross-link: Glycyl lysine isopeptide (Lys-Gly) (interchain with G-Cter in SUMO2); alternate. K319 participates in a covalent cross-link: Glycyl lysine isopeptide (Lys-Gly) (interchain with G-Cter in SUMO2). The residue at position 340 (K340) is an N6-acetyllysine. Residue K366 forms a Glycyl lysine isopeptide (Lys-Gly) (interchain with G-Cter in SUMO2) linkage. Residues 366–370 are involved in binding PPP1CA; sequence KLIYF. Position 377 is an N6-acetyllysine; alternate (K377). A Glycyl lysine isopeptide (Lys-Gly) (interchain with G-Cter in SUMO2); alternate cross-link involves residue K377. K377 participates in a covalent cross-link: Glycyl lysine isopeptide (Lys-Gly) (interchain with G-Cter in SUMO1); alternate. A Glycyl lysine isopeptide (Lys-Gly) (interchain with G-Cter in SUMO2) cross-link involves residue K407. A disordered region spans residues 411-480; it reads ERPGTNSTGP…SRSGEGEVSG (70 aa). S417 carries the phosphoserine modification. K434 participates in a covalent cross-link: Glycyl lysine isopeptide (Lys-Gly) (interchain with G-Cter in SUMO2). Positions 434–443 are enriched in polar residues; sequence KQGSGSSQPM. Phosphoserine is present on residues S437, S439, and S453. K469 is covalently cross-linked (Glycyl lysine isopeptide (Lys-Gly) (interchain with G-Cter in SUMO2); alternate). K469 participates in a covalent cross-link: Glycyl lysine isopeptide (Lys-Gly) (interchain with G-Cter in SUMO1); alternate. R470 carries the citrulline modification. S471 is modified (phosphoserine). R472 is modified (citrulline). A phosphoserine mark is found at S473, S479, and S489. An HP1 box region spans residues 476-513; sequence GEVSGLMRKVPRVSLERLDLDLTADSQPPVFKVFPGST. A PxVxL motif motif is present at residues 481–494; the sequence is LMRKVPRVSLERLD. T498 bears the Phosphothreonine mark. Position 501 is a phosphoserine (S501). K507 is covalently cross-linked (Glycyl lysine isopeptide (Lys-Gly) (interchain with G-Cter in SUMO2)). A Phosphothreonine modification is found at T541. Residue K554 forms a Glycyl lysine isopeptide (Lys-Gly) (interchain with G-Cter in SUMO2); alternate linkage. Residue K554 forms a Glycyl lysine isopeptide (Lys-Gly) (interchain with G-Cter in SUMO); alternate linkage. Residue K575 forms a Glycyl lysine isopeptide (Lys-Gly) (interchain with G-Cter in SUMO2) linkage. The tract at residues 584 to 618 is disordered; that stretch reads GPGAEGPRLASPSGSTSSGLEVVAPEGTSAPGGGP. The residue at position 594 (S594) is a Phosphoserine. The PHD-type zinc-finger motif lies at 625–672; that stretch reads ATICRVCQKPGDLVMCNQCEFCFHLDCHLPALQDVPGEEWSCSLCHVL. A Glycyl lysine isopeptide (Lys-Gly) (interchain with G-Cter in SUMO) cross-link involves residue K676. Phosphoserine occurs at positions 683, 689, and 697. The 105-residue stretch at 695–799 folds into the Bromo domain; the sequence is KLSPANQRKC…RFFETRMNEA (105 aa). K750 participates in a covalent cross-link: Glycyl lysine isopeptide (Lys-Gly) (interchain with G-Cter in SUMO2); alternate. K750 participates in a covalent cross-link: Glycyl lysine isopeptide (Lys-Gly) (interchain with G-Cter in SUMO1); alternate. A Glycyl lysine isopeptide (Lys-Gly) (interchain with G-Cter in SUMO); alternate cross-link involves residue K750. S752 carries the post-translational modification Phosphoserine. Y755 carries the post-translational modification Phosphotyrosine. The residue at position 757 (S757) is a Phosphoserine. N6-acetyllysine; alternate occurs at positions 770, 774, and 779. Glycyl lysine isopeptide (Lys-Gly) (interchain with G-Cter in SUMO2); alternate cross-links involve residues K770, K774, and K779. K779 is covalently cross-linked (Glycyl lysine isopeptide (Lys-Gly) (interchain with G-Cter in SUMO1); alternate). S784 is subject to Phosphoserine. A Glycyl lysine isopeptide (Lys-Gly) (interchain with G-Cter in SUMO2); alternate cross-link involves residue K804. A Glycyl lysine isopeptide (Lys-Gly) (interchain with G-Cter in SUMO); alternate cross-link involves residue K804. A disordered region spans residues 815–835; that stretch reads MSLPGAGLSSQELSGGPGDGP. At S824 the chain carries Phosphoserine; by ATM and ATR and dsDNA kinase.

This sequence belongs to the TRIM/RBCC family. As to quaternary structure, interacts with SETX. Oligomer; the RBCC domain homotrimerizes and interacts with one molecule of KRAB to form the KRAB-KAP1 corepressor complex. Binding to a KRAB domain is an absolute requirement for silencing gene expression. Interacts with CEBPB and NR3C1. Interacts with a number of KRAB-ZFP proteins including ZNF10, ZFP53, ZFP68, ZNF382 and ZNF256. Interacts with NCOR1, NR3C1 and CHD3. Interacts with CEBPB (via the RING-type and PHD-type zinc fingers). Component of a ternary complex that includes TRIM28, a HP1 protein (CBX1, CBX3 OR CBX5), a KRAB domain-containing protein, and DNA. Interacts with CBX5 (via the PxVxL motif); the interaction occurs in interphase nuclei and competes for binding POGZ. Interacts with POGZ; the interaction competes for interaction with CBX5. Interacts with SETDB1; the interaction is enhanced by KAP1 sumoylation, stimulates SETDB1 histone methyltransferase activity and gene silencing. Interacts (via the PHD-type zinc finger) with UBE2I; the interaction is required for sumoylation and repressor activity. Component of the TRIM28/KAP1-ERBB4-MDM2 complex involved in connecting growth factor and DNA damage responses. Interacts directly with ERBB4; the interaction represses ERBB4-mediated transcription activity. Interacts with MDM2; the interaction contributes to p53/TP53 inactivation. Component of the TRIM28/KAP1-MDM2-p53/TP53; involved in regulating p53/TP53 stabilization and activity. Interacts (via the leucine zipper alpha helical coiled-coil) with E2F1 (central region); the interaction inhibits E2F1 acetylation and transcriptional activity. Interacts with PPP1CA; the interaction dephosphorylates TRIM28 at Ser-824 and forms a complex at the p21 promoter site. Interacts with PPP1CB; the interaction is weak but is increased on dephosphorylation at Ser-824. Interacts with FES/FPS. Interacts with SMARCAD1. Interacts with, and sumoylates IRF7. Interacts with MAGEC2. Part of a complex composed of TRIM28, HDAC1, HDAC2 and EHMT2. Interacts with AICDA. Interacts (via the RBCC domain) with KOX1 (via the KRAB domain), ZNF268 (via the KRAB domain) and ZNF300 (via the KRAB domain); the interactions increase KOX1, ZNF268 and ZNF300 nuclear localization activities. The large PER complex involved in the histone methylation is composed of at least PER2, CBX3, TRIM28, SUV39H1 and/or SUV39H2; CBX3 mediates the formation of the complex. Interacts with isoform 2 of ZFP90. Forms a complex with FOXP3 in the presence of isoform 2 of ZFP90. Interacts with NR4A3; the interactions potentiates NR4A3 activity on NurRE promoter. Interacts (unphosphorylated or phosphorylated form) with ZBTB1 (via BTB domain). Probably part of a corepressor complex containing ZNF304, TRIM28, SETDB1 and DNMT1. Interacts with ATRX. Forms a complex with ATRX, SETDB1 and ZNF274. Interacts with ZFP568; the interaction mediates ZFP568 transcriptional repression activity. Interacts with RRP1B. Interacts with CRY1. Interacts with ZNF263; recruited to the SIX3 promoter along with other proteins involved in chromatin modification and transcriptional corepression where it contributes to transcriptional repression. Interacts with CYREN (via XLF motif). Interacts with TRIM17; this interaction prevents TRIM28 activity. Interacts with ZNF746. Interacts with PHF13. Interacts with ZNF354C. Interacts with ZNF432; the interaction is independent of PARP1. (Microbial infection) Interacts with herpes virus 8 protein LANA1; this interaction facilitates establishment of viral latency. Post-translationally, ATM-induced phosphorylation on Ser-824 represses sumoylation leading to the de-repression of expression of a subset of genes involved in cell cycle control and apoptosis in response to genotoxic stress. Dephosphorylation by the phosphatases, PPP1CA and PP1CB forms, allows sumoylation and expression of TRIM28 target genes. In terms of processing, sumoylation/desumoylation events regulate TRIM28-mediated transcriptional repression. Sumoylation is required for interaction with CHD3 and SETDB1 and the corepressor activity. Represses and is repressed by Ser-824 phosphorylation. Enhances the TRIM28 corepressor activity, inhibiting transcriptional activity of a number of genes including GADD45A and CDKN1A/p21. Lys-554, Lys-779 and Lys-804 are the major sites of sumoylation. In response to Dox-induced DNA damage, enhanced phosphorylation on Ser-824 prevents sumoylation and allows de-repression of CDKN1A/p21. Auto-ubiquitinated; enhanced by MAGEA2 and MAGEC2. Post-translationally, citrullinated by PADI4. In terms of processing, ADP-ribosylated by SIRT6, promoting TRIM28/KAP1 interaction with CBX5, thereby contributing to the packaging of LINE-1 retrotransposon elements into transcriptionally repressive heterochromatin. As to expression, expressed in all tissues tested including spleen, thymus, prostate, testis, ovary, small intestine, colon and peripheral blood leukocytes.

The protein resides in the nucleus. The catalysed reaction is S-ubiquitinyl-[E2 ubiquitin-conjugating enzyme]-L-cysteine + [acceptor protein]-L-lysine = [E2 ubiquitin-conjugating enzyme]-L-cysteine + N(6)-ubiquitinyl-[acceptor protein]-L-lysine.. Its pathway is protein modification; protein sumoylation. Nuclear corepressor for KRAB domain-containing zinc finger proteins (KRAB-ZFPs). Mediates gene silencing by recruiting CHD3, a subunit of the nucleosome remodeling and deacetylation (NuRD) complex, and SETDB1 (which specifically methylates histone H3 at 'Lys-9' (H3K9me)) to the promoter regions of KRAB target genes. Enhances transcriptional repression by coordinating the increase in H3K9me, the decrease in histone H3 'Lys-9 and 'Lys-14' acetylation (H3K9ac and H3K14ac, respectively) and the disposition of HP1 proteins to silence gene expression. Recruitment of SETDB1 induces heterochromatinization. May play a role as a coactivator for CEBPB and NR3C1 in the transcriptional activation of ORM1. Also a corepressor for ERBB4. Inhibits E2F1 activity by stimulating E2F1-HDAC1 complex formation and inhibiting E2F1 acetylation. May serve as a partial backup to prevent E2F1-mediated apoptosis in the absence of RB1. Important regulator of CDKN1A/p21(CIP1). Has E3 SUMO-protein ligase activity toward itself via its PHD-type zinc finger. Also specifically sumoylates IRF7, thereby inhibiting its transactivation activity. Ubiquitinates p53/TP53 leading to its proteasomal degradation; the function is enhanced by MAGEC2 and MAGEA2, and possibly MAGEA3 and MAGEA6. Mediates the nuclear localization of KOX1, ZNF268 and ZNF300 transcription factors. In association with isoform 2 of ZFP90, is required for the transcriptional repressor activity of FOXP3 and the suppressive function of regulatory T-cells (Treg). Probably forms a corepressor complex required for activated KRAS-mediated promoter hypermethylation and transcriptional silencing of tumor suppressor genes (TSGs) or other tumor-related genes in colorectal cancer (CRC) cells. Required to maintain a transcriptionally repressive state of genes in undifferentiated embryonic stem cells (ESCs). In ESCs, in collaboration with SETDB1, is also required for H3K9me3 and silencing of endogenous and introduced retroviruses in a DNA-methylation independent-pathway. Associates at promoter regions of tumor suppressor genes (TSGs) leading to their gene silencing. The SETDB1-TRIM28-ZNF274 complex may play a role in recruiting ATRX to the 3'-exons of zinc-finger coding genes with atypical chromatin signatures to establish or maintain/protect H3K9me3 at these transcriptionally active regions. In terms of biological role, (Microbial infection) Plays a critical role in the shutdown of lytic gene expression during the early stage of herpes virus 8 primary infection. This inhibition is mediated through interaction with herpes virus 8 protein LANA1. This chain is Transcription intermediary factor 1-beta, found in Homo sapiens (Human).